Reading from the N-terminus, the 544-residue chain is Chaperonin GroEL (544 aa).

ATP contacts are provided by residues 30 to 33, Lys-51, 87 to 91, Gly-415, 479 to 481, and Asp-495; these read TLGP, DGTTT, and NAA.

The protein belongs to the chaperonin (HSP60) family. Forms a cylinder of 14 subunits composed of two heptameric rings stacked back-to-back. Interacts with the co-chaperonin GroES.

Its subcellular location is the cytoplasm. The enzyme catalyses ATP + H2O + a folded polypeptide = ADP + phosphate + an unfolded polypeptide.. Functionally, together with its co-chaperonin GroES, plays an essential role in assisting protein folding. The GroEL-GroES system forms a nano-cage that allows encapsulation of the non-native substrate proteins and provides a physical environment optimized to promote and accelerate protein folding. This Francisella tularensis subsp. tularensis (strain SCHU S4 / Schu 4) protein is Chaperonin GroEL.